The following is a 297-amino-acid chain: N-acetylneuraminate lyase (297 aa).

Residues Ser-47 and Thr-48 each contribute to the aceneuramate site. Tyr-137 functions as the Proton donor in the catalytic mechanism. The active-site Schiff-base intermediate with substrate is the Lys-165. Aceneuramate-binding residues include Thr-167, Gly-189, Asp-191, Glu-192, and Ser-208.

It belongs to the DapA family. NanA subfamily. In terms of assembly, homotetramer.

It is found in the cytoplasm. The enzyme catalyses aceneuramate = aldehydo-N-acetyl-D-mannosamine + pyruvate. It participates in amino-sugar metabolism; N-acetylneuraminate degradation; D-fructose 6-phosphate from N-acetylneuraminate: step 1/5. In terms of biological role, catalyzes the reversible aldol cleavage of N-acetylneuraminic acid (sialic acid; Neu5Ac) to form pyruvate and N-acetylmannosamine (ManNAc) via a Schiff base intermediate. This is N-acetylneuraminate lyase from Salmonella choleraesuis (strain SC-B67).